The chain runs to 290 residues: MSLTSRLYKPRLFSLPSQHSFRALPILSPPLRSSCIPAPLSVRASLSTRSIATSIAMGEAAADAGMDAVQRRLMFDDECILVDEVDCVVGHESKYNCHLWEKIESGNMLHRAFTVFLFNSKFELLLQQRSATKVTFPLVWTNTCCSHPLYRESELIDENNLGVRNAAQRKLLDELGIPAEDVPVDEFTPVSRMLYKAPSDGKWGEHELDYLLFIVRDVGIHPNPDEVADIKYVNREQLKELLRKADAGEEGLKLSPWFRLVVDNFLPKWWDHVEKGTLSEAVDMKTIHNL.

In terms of domain architecture, Nudix hydrolase spans 108-260 (MLHRAFTVFL…GLKLSPWFRL (153 aa)). Active-site residues include Cys-145 and Glu-207.

The protein belongs to the IPP isomerase type 1 family.

It catalyses the reaction isopentenyl diphosphate = dimethylallyl diphosphate. The protein operates within isoprenoid biosynthesis; dimethylallyl diphosphate biosynthesis; dimethylallyl diphosphate from isopentenyl diphosphate: step 1/1. It functions in the pathway porphyrin-containing compound metabolism; chlorophyll biosynthesis. In terms of biological role, catalyzes the 1,3-allylic rearrangement of the homoallylic substrate isopentenyl (IPP) to its highly electrophilic allylic isomer, dimethylallyl diphosphate (DMAPP). The protein is Isopentenyl-diphosphate Delta-isomerase II (IPI2) of Clarkia xantiana (Gunsight clarkia).